The sequence spans 261 residues: Cytochrome c oxidase subunit 3 (261 aa).

Topologically, residues 1-15 (MTHQTHAYHMVNPSP) are mitochondrial matrix. Residues 16 to 34 (WPLTGALSALLMTSGLIMW) traverse the membrane as a helical segment. Topologically, residues 35–40 (FHFNST) are mitochondrial intermembrane. The helical transmembrane segment at 41-66 (TLLMLGLTTNMLTMYQWWRDVIREST) threads the bilayer. Over 67 to 72 (FQGHHT) the chain is Mitochondrial matrix. The helical transmembrane segment at 73–105 (PNVQKGLRYGMILFIISEVLFFTGFFWAFYHSS) threads the bilayer. Residues 106–128 (LAPTPELGGCWPPTGIHPLNPLE) lie on the Mitochondrial intermembrane side of the membrane. The helical transmembrane segment at 129–152 (VPLLNTSVLLASGVSITWAHHSLM) threads the bilayer. The Mitochondrial matrix segment spans residues 153-155 (EGN). The helical transmembrane segment at 156–183 (RNHMLQALFITIALGVYFTLLQASEYYE) threads the bilayer. The Mitochondrial intermembrane segment spans residues 184-190 (APFTISD). The helical transmembrane segment at 191–223 (GVYGSTFFVATGFHGLHVIIGSTFLIVCFFRQL) threads the bilayer. Over 224–232 (KFHFTSNHH) the chain is Mitochondrial matrix. The helical transmembrane segment at 233–256 (FGFEAAAWYWHFVDVVWLFLYVSI) threads the bilayer. Residues 257-261 (YWWGS) lie on the Mitochondrial intermembrane side of the membrane.

Belongs to the cytochrome c oxidase subunit 3 family. Component of the cytochrome c oxidase (complex IV, CIV), a multisubunit enzyme composed of 14 subunits. The complex is composed of a catalytic core of 3 subunits MT-CO1, MT-CO2 and MT-CO3, encoded in the mitochondrial DNA, and 11 supernumerary subunits COX4I, COX5A, COX5B, COX6A, COX6B, COX6C, COX7A, COX7B, COX7C, COX8 and NDUFA4, which are encoded in the nuclear genome. The complex exists as a monomer or a dimer and forms supercomplexes (SCs) in the inner mitochondrial membrane with NADH-ubiquinone oxidoreductase (complex I, CI) and ubiquinol-cytochrome c oxidoreductase (cytochrome b-c1 complex, complex III, CIII), resulting in different assemblies (supercomplex SCI(1)III(2)IV(1) and megacomplex MCI(2)III(2)IV(2)).

It localises to the mitochondrion inner membrane. The catalysed reaction is 4 Fe(II)-[cytochrome c] + O2 + 8 H(+)(in) = 4 Fe(III)-[cytochrome c] + 2 H2O + 4 H(+)(out). Its function is as follows. Component of the cytochrome c oxidase, the last enzyme in the mitochondrial electron transport chain which drives oxidative phosphorylation. The respiratory chain contains 3 multisubunit complexes succinate dehydrogenase (complex II, CII), ubiquinol-cytochrome c oxidoreductase (cytochrome b-c1 complex, complex III, CIII) and cytochrome c oxidase (complex IV, CIV), that cooperate to transfer electrons derived from NADH and succinate to molecular oxygen, creating an electrochemical gradient over the inner membrane that drives transmembrane transport and the ATP synthase. Cytochrome c oxidase is the component of the respiratory chain that catalyzes the reduction of oxygen to water. Electrons originating from reduced cytochrome c in the intermembrane space (IMS) are transferred via the dinuclear copper A center (CU(A)) of subunit 2 and heme A of subunit 1 to the active site in subunit 1, a binuclear center (BNC) formed by heme A3 and copper B (CU(B)). The BNC reduces molecular oxygen to 2 water molecules using 4 electrons from cytochrome c in the IMS and 4 protons from the mitochondrial matrix. The sequence is that of Cytochrome c oxidase subunit 3 (MT-CO3) from Antilope cervicapra (Blackbuck).